The following is a 251-amino-acid chain: Imidazole glycerol phosphate synthase subunit HisF (251 aa).

Catalysis depends on residues Asp-11 and Asp-130.

Belongs to the HisA/HisF family. As to quaternary structure, heterodimer of HisH and HisF.

It is found in the cytoplasm. It carries out the reaction 5-[(5-phospho-1-deoxy-D-ribulos-1-ylimino)methylamino]-1-(5-phospho-beta-D-ribosyl)imidazole-4-carboxamide + L-glutamine = D-erythro-1-(imidazol-4-yl)glycerol 3-phosphate + 5-amino-1-(5-phospho-beta-D-ribosyl)imidazole-4-carboxamide + L-glutamate + H(+). It participates in amino-acid biosynthesis; L-histidine biosynthesis; L-histidine from 5-phospho-alpha-D-ribose 1-diphosphate: step 5/9. Its function is as follows. IGPS catalyzes the conversion of PRFAR and glutamine to IGP, AICAR and glutamate. The HisF subunit catalyzes the cyclization activity that produces IGP and AICAR from PRFAR using the ammonia provided by the HisH subunit. The polypeptide is Imidazole glycerol phosphate synthase subunit HisF (Phocaeicola vulgatus (strain ATCC 8482 / DSM 1447 / JCM 5826 / CCUG 4940 / NBRC 14291 / NCTC 11154) (Bacteroides vulgatus)).